The chain runs to 352 residues: 3-isopropylmalate dehydrogenase (352 aa).

An NAD(+)-binding site is contributed by 76-89 (GYKWENLPHDKKPE). 4 residues coordinate substrate: arginine 96, arginine 106, arginine 134, and aspartate 220. Aspartate 220, aspartate 244, and aspartate 248 together coordinate Mg(2+). 277-289 (GSAPDIAGQNKAN) contacts NAD(+).

It belongs to the isocitrate and isopropylmalate dehydrogenases family. LeuB type 1 subfamily. In terms of assembly, homodimer. The cofactor is Mg(2+). Mn(2+) serves as cofactor.

Its subcellular location is the cytoplasm. The enzyme catalyses (2R,3S)-3-isopropylmalate + NAD(+) = 4-methyl-2-oxopentanoate + CO2 + NADH. The protein operates within amino-acid biosynthesis; L-leucine biosynthesis; L-leucine from 3-methyl-2-oxobutanoate: step 3/4. In terms of biological role, catalyzes the oxidation of 3-carboxy-2-hydroxy-4-methylpentanoate (3-isopropylmalate) to 3-carboxy-4-methyl-2-oxopentanoate. The product decarboxylates to 4-methyl-2 oxopentanoate. The chain is 3-isopropylmalate dehydrogenase from Chlorobaculum tepidum (strain ATCC 49652 / DSM 12025 / NBRC 103806 / TLS) (Chlorobium tepidum).